A 930-amino-acid chain; its full sequence is Isoleucine--tRNA ligase (930 aa).

A 'HIGH' region motif is present at residues 57–67; sequence PYANGHIHLGT. Glutamate 559 provides a ligand contact to L-isoleucyl-5'-AMP. Residues 600–604 carry the 'KMSKS' region motif; sequence KMSKS. Lysine 603 serves as a coordination point for ATP. Residues cysteine 899, cysteine 902, cysteine 918, and cysteine 921 each coordinate Zn(2+).

The protein belongs to the class-I aminoacyl-tRNA synthetase family. IleS type 1 subfamily. Monomer. Zn(2+) serves as cofactor.

Its subcellular location is the cytoplasm. It catalyses the reaction tRNA(Ile) + L-isoleucine + ATP = L-isoleucyl-tRNA(Ile) + AMP + diphosphate. In terms of biological role, catalyzes the attachment of isoleucine to tRNA(Ile). As IleRS can inadvertently accommodate and process structurally similar amino acids such as valine, to avoid such errors it has two additional distinct tRNA(Ile)-dependent editing activities. One activity is designated as 'pretransfer' editing and involves the hydrolysis of activated Val-AMP. The other activity is designated 'posttransfer' editing and involves deacylation of mischarged Val-tRNA(Ile). The sequence is that of Isoleucine--tRNA ligase from Desulforudis audaxviator (strain MP104C).